Here is a 136-residue protein sequence, read N- to C-terminus: Aspartate 1-decarboxylase (136 aa).

Catalysis depends on Ser-25, which acts as the Schiff-base intermediate with substrate; via pyruvic acid. Pyruvic acid (Ser) is present on Ser-25. Residue Thr-57 coordinates substrate. Tyr-58 acts as the Proton donor in catalysis. Position 73–75 (73–75 (GAA)) interacts with substrate.

This sequence belongs to the PanD family. Heterooctamer of four alpha and four beta subunits. It depends on pyruvate as a cofactor. In terms of processing, is synthesized initially as an inactive proenzyme, which is activated by self-cleavage at a specific serine bond to produce a beta-subunit with a hydroxyl group at its C-terminus and an alpha-subunit with a pyruvoyl group at its N-terminus.

It localises to the cytoplasm. The enzyme catalyses L-aspartate + H(+) = beta-alanine + CO2. It participates in cofactor biosynthesis; (R)-pantothenate biosynthesis; beta-alanine from L-aspartate: step 1/1. Catalyzes the pyruvoyl-dependent decarboxylation of aspartate to produce beta-alanine. This Corynebacterium efficiens (strain DSM 44549 / YS-314 / AJ 12310 / JCM 11189 / NBRC 100395) protein is Aspartate 1-decarboxylase.